Consider the following 381-residue polypeptide: Succinyl-diaminopimelate desuccinylase (381 aa).

Residue His72 participates in Zn(2+) binding. Residue Asp74 is part of the active site. Zn(2+) is bound at residue Asp103. Glu133 acts as the Proton acceptor in catalysis. Zn(2+)-binding residues include Glu134, Glu163, and His348.

The protein belongs to the peptidase M20A family. DapE subfamily. In terms of assembly, homodimer. Zn(2+) serves as cofactor. Co(2+) is required as a cofactor.

The enzyme catalyses N-succinyl-(2S,6S)-2,6-diaminopimelate + H2O = (2S,6S)-2,6-diaminopimelate + succinate. Its pathway is amino-acid biosynthesis; L-lysine biosynthesis via DAP pathway; LL-2,6-diaminopimelate from (S)-tetrahydrodipicolinate (succinylase route): step 3/3. Catalyzes the hydrolysis of N-succinyl-L,L-diaminopimelic acid (SDAP), forming succinate and LL-2,6-diaminopimelate (DAP), an intermediate involved in the bacterial biosynthesis of lysine and meso-diaminopimelic acid, an essential component of bacterial cell walls. In Anaplasma marginale (strain Florida), this protein is Succinyl-diaminopimelate desuccinylase.